Reading from the N-terminus, the 185-residue chain is MISSNDFRPGVSIVLDGSVWRVIDFLHVKPGKGSAFVRTTLKNVQSGKVLEKTFRAGETVPQATLEKITMQHTYKEGDEFVFMDMESYEEGRLSASQIGDRVKYLKEGMEVNVIRWGEQVLEVELANSVVLEVIQTDPGVKGDTATGGTKPAIVETGATVMVPLFISQGERIKIDTRDDKYLGRE.

This sequence belongs to the elongation factor P family.

The protein resides in the cytoplasm. It participates in protein biosynthesis; polypeptide chain elongation. Functionally, involved in peptide bond synthesis. Stimulates efficient translation and peptide-bond synthesis on native or reconstituted 70S ribosomes in vitro. Probably functions indirectly by altering the affinity of the ribosome for aminoacyl-tRNA, thus increasing their reactivity as acceptors for peptidyl transferase. The chain is Elongation factor P from Trichormus variabilis (strain ATCC 29413 / PCC 7937) (Anabaena variabilis).